Reading from the N-terminus, the 353-residue chain is D-alanine--D-alanine ligase (353 aa).

The region spanning 141 to 349 (KAALAGAGLA…LEQLVHELLE (209 aa)) is the ATP-grasp domain. An ATP-binding site is contributed by 176 to 231 (ESGLCYPCFIKPANLGSSVGISKARNREELIHGLRLAATLDPRLVVEQGVQARELE). D302, E316, and N318 together coordinate Mg(2+).

Belongs to the D-alanine--D-alanine ligase family. Requires Mg(2+) as cofactor. Mn(2+) is required as a cofactor.

Its subcellular location is the cytoplasm. It catalyses the reaction 2 D-alanine + ATP = D-alanyl-D-alanine + ADP + phosphate + H(+). It participates in cell wall biogenesis; peptidoglycan biosynthesis. Its function is as follows. Cell wall formation. The protein is D-alanine--D-alanine ligase of Parasynechococcus marenigrum (strain WH8102).